The chain runs to 210 residues: Putative biopolymer transport protein ExbB-like 3 (210 aa).

3 helical membrane-spanning segments follow: residues 2 to 22, 104 to 124, and 152 to 172; these read AGGIVAVPLLGFSLLAVALII, LFQTIITVSPLLGLLGTILGL, and LVSTVMGLVVAIATLLFANVF.

It belongs to the ExbB/TolQ family.

The protein resides in the cell inner membrane. Involved in the TonB-dependent energy-dependent transport of various receptor-bound substrates. Protects ExbD from proteolytic degradation and functionally stabilizes TonB. The protein is Putative biopolymer transport protein ExbB-like 3 of Synechocystis sp. (strain ATCC 27184 / PCC 6803 / Kazusa).